The sequence spans 728 residues: Ubiquitin carboxyl-terminal hydrolase BAP1 (728 aa).

A UCH catalytic domain is found at 4–235 (GWLELESDPG…IRFNLMAVVP (232 aa)). The Arg-finger motif signature appears at 56–60 (RRSRR). Cys-91 acts as the Nucleophile in catalysis. His-169 serves as the catalytic Proton donor. Positions 273–333 (THKSQESQLP…TTHSPPSKCK (61 aa)) are disordered. Ser-292 carries the post-translational modification Phosphoserine. Positions 363–366 (NHNY) match the HBM-like motif motif. Residues Ser-369 and Ser-395 each carry the phosphoserine modification. Disordered regions lie at residues 372-436 (QEEE…DGQL) and 463-523 (SIKT…SPVT). Acidic residues predominate over residues 395–408 (SEDEDDYEDEDEDV). Composition is skewed to polar residues over residues 427–436 (SLSNSSDGQL) and 479–523 (THSQ…SPVT). Thr-492 is modified (phosphothreonine). Phosphoserine is present on residues Ser-520, Ser-536, and Ser-584. The tract at residues 574–623 (LTEGGKGSSPSTRSSQGSQGSSGLEEKEVVEVTESRDKPGLNRSSEPLSG) is disordered. Low complexity predominate over residues 581-596 (SSPSTRSSQGSQGSSG). Residues 595–720 (SGLEEKEVVE…QRKPDRRKRS (126 aa)) are interaction with BRCA1. Residues 597 to 613 (LEEKEVVEVTESRDKPG) are compositionally biased toward basic and acidic residues. Positions 629-660 (KELLALLKCVEAEIANYEACLKEEVEKRKKFK) form a coiled coil. An interaction with YY1 region spans residues 641 to 685 (EIANYEACLKEEVEKRKKFKIDDQRRTHNYDEFICTFISMLAQEG). The ULD domain maps to 669–697 (NYDEFICTFISMLAQEGMLANLVEQNISV). The tract at residues 698–700 (RRR) is interaction with nucleosomal DNA forming a DNA clamp with ASXL1. The Classical bipartite Nuclear localization signal (NLS) motif lies at 698 to 721 (RRRQGVSIGRLHKQRKPDRRKRSR). The interval 702–728 (GVSIGRLHKQRKPDRRKRSRPYKAKRQ) is disordered. Positions 712-728 (RKPDRRKRSRPYKAKRQ) are positively charged C-terminal extension (CTE). Residues 716-721 (RRKRSR) carry the Nuclear localization signal motif. Positions 716–723 (RRKRSRPY) match the Non-classical PY-nuclear localization signal (PY-NLS) motif.

The protein belongs to the peptidase C12 family. BAP1 subfamily. In terms of assembly, core component of the polycomb repressive deubiquitinase (PR-DUB) complex, at least composed of BAP1, one of ASXL1, ASXL2 or (probably) ASXL3, and one of MBD5 or MBD6. The PR-DUB core associates with a number of accessory proteins, including FOXK1, FOXK2, KDM1B, HCFC1, YY1 and OGT; KDM1B specifically associates with ASXL2 PR-DUB complexes. The BAP1 deubiquitinase activity is not required for PR-DUB assembly. Homodimerizes (via coiled-coil hinge-region between the UCH and ULD domains) to mediate assembly of 2 copies of the BAP1-ASXL heterodimer into a bisymmetric tetramer; dimerization enhances association with nucleosomes. The PR-DUB complex associates with nucleosomes to mediate deubiquitination of 'lys-120' of histone H2AK118ub1 substrates; the association requires the positively charged C-terminal tail of BAP1. Interacts (via ULD domain) with ASXL1 (via DEUBAD domain); the interaction is direct and forms a ubiquitin binding cleft. The interaction with ASXL1 stabilizes BAP1 but is not required for nucleosome binding. Associates (via C-terminus) with nucleosome and chromatosome complexes through direct interaction with DNA and the histone3/4 dimer; this association displaces the histone-2A C-terminal tail, extending and orienting the H2AK118ub1 substrate towards the BAP1 deubiquitinase active site. Also interacts (via arginine finger) directly with the histone H2A-H2B acidic patch; this interaction is not critical for nucleosome-chromatosome association but may play a role in orienting the H2AK118ub1 substrate towards the PR-DUB complex active site. Interacts with BRCA1 (via the RING finger). Interacts (via HBM-like motif) with HCFC1. Interacts (via a C-terminal region overlapping the ULD domain) with YY1; the interaction is direct and requires the interaction with HCFC1. Interacts (when phosphorylated at Thr-492) with FOXK1. Interacts (when phosphorylated at Thr-492) with FOXK2; leading to recruitment of the PR-DUB complex and repression of FOXK2 target genes. Interacts (via non-classical PY-NLS) with TNPO1/transportin-1 (via HEAT repeats 8-12); the interaction is direct, mediates BAP1 nuclear localization and disrupts BAP1 homodimerization. Interacts (via C-terminus) with KPNA1/importin alpha5 and KPNA2/importin alpha1; these interactions can contribute to BAP1 nuclear localization but are less important than the interaction with TNPO1/transportin-1. The interaction with TNPO1/transportin-1 disrupts homodimerization and blocks ubiquitination by UBE2O. Ubiquitinated: monoubiquitinated at multiple sites within its nuclear localization signal (NLS) BY UBE2O, leading to cytoplasmic retention. Able to mediate autodeubiquitination via intramolecular interactions to counteract cytoplasmic retention. Monoubiquitinated on at least 4 sites near or within its PY-NLS. As to expression, highly expressed in mammary glands, testis and ovary. Up-regulated in mammary glands during puberty, pregnancy, and as a result of parity.

The protein localises to the cytoplasm. Its subcellular location is the nucleus. The protein resides in the chromosome. The catalysed reaction is Thiol-dependent hydrolysis of ester, thioester, amide, peptide and isopeptide bonds formed by the C-terminal Gly of ubiquitin (a 76-residue protein attached to proteins as an intracellular targeting signal).. Its function is as follows. Deubiquitinating enzyme that plays a key role in chromatin by mediating deubiquitination of histone H2A and HCFC1. Catalytic component of the polycomb repressive deubiquitinase (PR-DUB) complex, a complex that specifically mediates deubiquitination of histone H2A monoubiquitinated at 'Lys-120' (H2AK119ub1). Does not deubiquitinate monoubiquitinated histone H2B. The PR-DUB complex is an epigenetic regulator of gene expression and acts as a transcriptional coactivator, affecting genes involved in development, cell communication, signaling, cell proliferation and cell viability. Antagonizes PRC1 mediated H2AK119ub1 monoubiquitination. As part of the PR-DUB complex, associates with chromatin enriched in histone marks H3K4me1, H3K4me3, and H3K27Ac, but not in H3K27me3. Acts as a regulator of cell growth by mediating deubiquitination of HCFC1 N-terminal and C-terminal chains, with some specificity toward 'Lys-48'-linked polyubiquitin chains compared to 'Lys-63'-linked polyubiquitin chains. Deubiquitination of HCFC1 does not lead to increase stability of HCFC1. Interferes with the BRCA1 and BARD1 heterodimer activity by inhibiting their ability to mediate ubiquitination and autoubiquitination. It however does not mediate deubiquitination of BRCA1 and BARD1. Able to mediate autodeubiquitination via intramolecular interactions to counteract monoubiquitination at the nuclear localization signal (NLS), thereby protecting it from cytoplasmic sequestration. Negatively regulates epithelial-mesenchymal transition (EMT) of trophoblast stem cells during placental development by regulating genes involved in epithelial cell integrity, cell adhesion and cytoskeletal organization. The protein is Ubiquitin carboxyl-terminal hydrolase BAP1 (Bap1) of Mus musculus (Mouse).